The chain runs to 156 residues: SsrA-binding protein (156 aa).

The tract at residues 127–156 is disordered; it reads GKKKYDKREDLKKKDAKRDVDRAMRDRQKY. A compositionally biased stretch (basic and acidic residues) spans 132 to 156; it reads DKREDLKKKDAKRDVDRAMRDRQKY.

Belongs to the SmpB family.

The protein resides in the cytoplasm. Functionally, required for rescue of stalled ribosomes mediated by trans-translation. Binds to transfer-messenger RNA (tmRNA), required for stable association of tmRNA with ribosomes. tmRNA and SmpB together mimic tRNA shape, replacing the anticodon stem-loop with SmpB. tmRNA is encoded by the ssrA gene; the 2 termini fold to resemble tRNA(Ala) and it encodes a 'tag peptide', a short internal open reading frame. During trans-translation Ala-aminoacylated tmRNA acts like a tRNA, entering the A-site of stalled ribosomes, displacing the stalled mRNA. The ribosome then switches to translate the ORF on the tmRNA; the nascent peptide is terminated with the 'tag peptide' encoded by the tmRNA and targeted for degradation. The ribosome is freed to recommence translation, which seems to be the essential function of trans-translation. The protein is SsrA-binding protein of Exiguobacterium sp. (strain ATCC BAA-1283 / AT1b).